The sequence spans 321 residues: p-hydroxybenzoic acid efflux pump subunit AaeA (321 aa).

Residues 22-42 form a helical membrane-spanning segment; sequence VVITLVIVLCAIVAIFRVWAF.

The protein belongs to the membrane fusion protein (MFP) (TC 8.A.1) family.

The protein resides in the cell inner membrane. Its function is as follows. Forms an efflux pump with AaeB. The polypeptide is p-hydroxybenzoic acid efflux pump subunit AaeA (Pectobacterium atrosepticum (strain SCRI 1043 / ATCC BAA-672) (Erwinia carotovora subsp. atroseptica)).